The sequence spans 361 residues: MPVLLDSSRAPRLDALLSKGNTQGLECQIDSPTGDLPLIAGIGTLASAGAQEIAFLSNPRYQSQVASTAAAAVIVTLDVAQALRAQGSTLVFVVCRHPYLLYARLAQWFDAERRGLPPAGVHPSAVVAPDAVIEEGASVGPQCVVDSGARIGRGASLGPGCIVGQGSTVGANSRLHARVTLYDGVHVGARAIIHSGAVLGADGFGFAPDPTLGKGAWGKIPQLGGVTVGNDVEIGANTTIDRGAIENTIIGDGVKLDNLIMIAHNVRIGAHTAVAACVGIAGSTVIGERCIVGGAAMFSGHLSICDDVTISGGTPVTSSITKPGRYTGVYPYSEHGEWQRNAAVIQQLALLRRRVRALEKA.

The active-site Proton acceptor is histidine 264.

The protein belongs to the transferase hexapeptide repeat family. LpxD subfamily. As to quaternary structure, homotrimer.

It catalyses the reaction a UDP-3-O-[(3R)-3-hydroxyacyl]-alpha-D-glucosamine + a (3R)-hydroxyacyl-[ACP] = a UDP-2-N,3-O-bis[(3R)-3-hydroxyacyl]-alpha-D-glucosamine + holo-[ACP] + H(+). It functions in the pathway bacterial outer membrane biogenesis; LPS lipid A biosynthesis. Functionally, catalyzes the N-acylation of UDP-3-O-acylglucosamine using 3-hydroxyacyl-ACP as the acyl donor. Is involved in the biosynthesis of lipid A, a phosphorylated glycolipid that anchors the lipopolysaccharide to the outer membrane of the cell. The chain is UDP-3-O-acylglucosamine N-acyltransferase from Bordetella avium (strain 197N).